Reading from the N-terminus, the 188-residue chain is HGPRTase-like protein 1 (188 aa).

This sequence belongs to the purine/pyrimidine phosphoribosyltransferase family. Archaeal HPRT subfamily.

May catalyze a purine salvage reaction, the substrate is unknown. The protein is HGPRTase-like protein 1 of Haloquadratum walsbyi (strain DSM 16854 / JCM 12705 / C23).